The primary structure comprises 93 residues: MQPLGERIVVQREESETTTAGGIVLPDSAKEKPARGTVVALGTGKLLDDGSRADFQLAAGDRVLFSSYAGETVEVDDTEYLLMREDDVLAVIE.

Residues 1 to 20 (MQPLGERIVVQREESETTTA) are disordered.

It belongs to the GroES chaperonin family. In terms of assembly, heptamer of 7 subunits arranged in a ring. Interacts with the chaperonin GroEL.

It localises to the cytoplasm. In terms of biological role, together with the chaperonin GroEL, plays an essential role in assisting protein folding. The GroEL-GroES system forms a nano-cage that allows encapsulation of the non-native substrate proteins and provides a physical environment optimized to promote and accelerate protein folding. GroES binds to the apical surface of the GroEL ring, thereby capping the opening of the GroEL channel. This Rhodopirellula baltica (strain DSM 10527 / NCIMB 13988 / SH1) protein is Co-chaperonin GroES 2.